The primary structure comprises 347 residues: NADH-ubiquinone oxidoreductase chain 2 (347 aa).

10 helical membrane-spanning segments follow: residues 1–21 (MNPL…GIVM), 25–45 (HWLT…PILM), 59–79 (YFLT…INLV), 96–116 (IILT…FWVP), 122–142 (VHLP…MSVL), 148–168 (MINL…GGWG), 200–220 (MALL…LTFM), 240–260 (ITTI…LSGF), 274–294 (NSII…FFYM), and 325–345 (LLSP…MLML).

This sequence belongs to the complex I subunit 2 family. In terms of assembly, core subunit of respiratory chain NADH dehydrogenase (Complex I) which is composed of 45 different subunits. Interacts with TMEM242.

It is found in the mitochondrion inner membrane. It catalyses the reaction a ubiquinone + NADH + 5 H(+)(in) = a ubiquinol + NAD(+) + 4 H(+)(out). Functionally, core subunit of the mitochondrial membrane respiratory chain NADH dehydrogenase (Complex I) which catalyzes electron transfer from NADH through the respiratory chain, using ubiquinone as an electron acceptor. Essential for the catalytic activity and assembly of complex I. This chain is NADH-ubiquinone oxidoreductase chain 2, found in Thoopterus nigrescens (Swift fruit bat).